The following is a 402-amino-acid chain: tRNA pseudouridine synthase Pus10 (402 aa).

The THUMP domain occupies 37-159 (RLRGERLVEK…QIRVHVQINP (123 aa)). Catalysis depends on Asp-228, which acts as the Nucleophile. The substrate site is built by Tyr-296 and Tyr-364.

Belongs to the pseudouridine synthase Pus10 family.

The enzyme catalyses uridine(54) in tRNA = pseudouridine(54) in tRNA. The catalysed reaction is uridine(55) in tRNA = pseudouridine(55) in tRNA. Its function is as follows. Responsible for synthesis of pseudouridine from uracil-54 and uracil-55 in the psi GC loop of transfer RNAs. This chain is tRNA pseudouridine synthase Pus10, found in Methanothermobacter marburgensis (strain ATCC BAA-927 / DSM 2133 / JCM 14651 / NBRC 100331 / OCM 82 / Marburg) (Methanobacterium thermoautotrophicum).